The following is a 713-amino-acid chain: Major surface-labeled trophozoite antigen 417 (713 aa).

Residues 1-17 (MFGRFLLAIVILQLART) form the signal peptide. Topologically, residues 18–679 (ACTQEADDGK…KDSGSTNKSG (662 aa)) are extracellular. Asparagine 289 and asparagine 676 each carry an N-linked (GlcNAc...) asparagine glycan. A helical membrane pass occupies residues 680–708 (LSTGAIAGISVAVIVVVGGLIGFLCWWFL). Over 709–713 (CRGKA) the chain is Cytoplasmic.

It belongs to the Giardia variant surface protein family.

It localises to the cell membrane. In Giardia intestinalis (Giardia lamblia), this protein is Major surface-labeled trophozoite antigen 417 (TSA 417).